The sequence spans 374 residues: Alanine racemase (374 aa).

Lys-40 serves as the catalytic Proton acceptor; specific for D-alanine. Lys-40 is subject to N6-(pyridoxal phosphate)lysine. Arg-139 contacts substrate. Tyr-261 serves as the catalytic Proton acceptor; specific for L-alanine. Residue Met-309 coordinates substrate.

Belongs to the alanine racemase family. It depends on pyridoxal 5'-phosphate as a cofactor.

It catalyses the reaction L-alanine = D-alanine. It functions in the pathway amino-acid biosynthesis; D-alanine biosynthesis; D-alanine from L-alanine: step 1/1. Its function is as follows. Catalyzes the interconversion of L-alanine and D-alanine. May also act on other amino acids. This Rhodospirillum rubrum (strain ATCC 11170 / ATH 1.1.1 / DSM 467 / LMG 4362 / NCIMB 8255 / S1) protein is Alanine racemase (alr).